The primary structure comprises 67 residues: Protein AaeX (67 aa).

The next 2 membrane-spanning stretches (helical) occupy residues 8–28 (VLFG…LPLF) and 47–67 (PALF…WLFI).

The protein belongs to the AaeX family.

The protein localises to the cell membrane. The chain is Protein AaeX from Edwardsiella piscicida.